The sequence spans 594 residues: Aspartate--tRNA(Asp/Asn) ligase (594 aa).

L-aspartate is bound at residue Glu-175. Positions 199–202 (QLFK) are aspartate. An L-aspartate-binding site is contributed by Arg-221. ATP-binding positions include 221–223 (RDE) and Gln-230. His-446 serves as a coordination point for L-aspartate. Glu-492 provides a ligand contact to ATP. Residue Arg-499 participates in L-aspartate binding. 544 to 547 (GFDR) contributes to the ATP binding site.

It belongs to the class-II aminoacyl-tRNA synthetase family. Type 1 subfamily. In terms of assembly, homodimer.

It localises to the cytoplasm. The enzyme catalyses tRNA(Asx) + L-aspartate + ATP = L-aspartyl-tRNA(Asx) + AMP + diphosphate. Its function is as follows. Aspartyl-tRNA synthetase with relaxed tRNA specificity since it is able to aspartylate not only its cognate tRNA(Asp) but also tRNA(Asn). Reaction proceeds in two steps: L-aspartate is first activated by ATP to form Asp-AMP and then transferred to the acceptor end of tRNA(Asp/Asn). In Hydrogenobaculum sp. (strain Y04AAS1), this protein is Aspartate--tRNA(Asp/Asn) ligase.